A 401-amino-acid polypeptide reads, in one-letter code: MKKSIILAIGNELVEGIIIDTNSKYISKKLLEIGYKTVAINTLPDDLEILVEEIRDSLKKADLLITTGGLGPTEDDLTREAISKTVGKELIFNEKLYNSILKKVKEFHSEIPKNIEKQAWVINGARIIENPVGTAPGQILQIGEKQIIILPGPPVEMKPIFEESLKFLEKFEKIYQKRIKTLGIPEAILVEKYKDIIYKYKDVNVATLASHISGVELRFTGKKEKVDEIVKLLKEKLSDHIYALDNETIEEVVFKKLEGKSVSFAESCTGGLISAKFVSIPGISKVFKGAIVAYSNKVKEKVLNVNKNTIQKYGAVSKECVMEMAKEVSYFLDTDYAVAVSGIAGPTGGTKEKPVGTVWICAYKRENDYYLVEKFFFRGNREIIREKSALNAFNLLRRILS.

Belongs to the CinA family.

The sequence is that of CinA-like protein from Thermosipho melanesiensis (strain DSM 12029 / CIP 104789 / BI429).